The following is a 252-amino-acid chain: Ribosome maturation factor RimP (252 aa).

The interval 188-252 (QGAAPGTEGG…PAAGPGAQDE (65 aa)) is disordered. Residues 208–224 (ARRPHQPKPKKAKKKGP) show a composition bias toward basic residues.

The protein belongs to the RimP family.

It localises to the cytoplasm. Its function is as follows. Required for maturation of 30S ribosomal subunits. The sequence is that of Ribosome maturation factor RimP from Rhodospirillum centenum (strain ATCC 51521 / SW).